Reading from the N-terminus, the 780-residue chain is ATP-dependent 6-phosphofructokinase, liver type (780 aa).

N-acetylalanine is present on Ala-2. Positions 2-390 are N-terminal catalytic PFK domain 1; sequence ASVDLEKLRT…NWNIYKLLSH (389 aa). Residues Gly-25, 88-89, and 118-121 each bind ATP; these read RC and GDGS. Residue Asp-119 coordinates Mg(2+). Substrate-binding positions include 164-166, Arg-201, 208-210, Glu-264, Arg-292, and 298-301; these read SID, MGR, and HVQR. Asp-166 serves as the catalytic Proton acceptor. Ser-377 carries the phosphoserine modification. Residues 391 to 400 form an interdomain linker region; that stretch reads QKISKEKTNF. A C-terminal regulatory PFK domain 2 region spans residues 401–780; sequence SLAILNVGAP…RRTLSIETGF (380 aa). Beta-D-fructose 2,6-bisphosphate contacts are provided by residues Arg-470, 527 to 531, Arg-565, 572 to 574, and Glu-628; these read TISNN and MGG. O-linked (GlcNAc) serine glycosylation is present at Ser-529. A Phosphotyrosine modification is found at Tyr-640. Residues Arg-654, 660-663, and Arg-734 each bind beta-D-fructose 2,6-bisphosphate; that span reads HLQQ. Position 775 is a phosphoserine (Ser-775).

Belongs to the phosphofructokinase type A (PFKA) family. ATP-dependent PFK group I subfamily. Eukaryotic two domain clade 'E' sub-subfamily. Homo- and heterotetramers. Phosphofructokinase (PFK) enzyme functions as a tetramer composed of different combinations of 3 types of subunits, called PFKM (M), PFKL (L) and PFKP (P). The composition of the PFK tetramer differs according to the tissue type it is present in. The kinetic and regulatory properties of the tetrameric enzyme are dependent on the subunit composition, hence can vary across tissues. Requires Mg(2+) as cofactor. Post-translationally, glcNAcylation at Ser-529 by OGT decreases enzyme activity, leading to redirect glucose flux through the oxidative pentose phosphate pathway. Glycosylation is stimulated by both hypoxia and glucose deprivation.

It is found in the cytoplasm. It carries out the reaction beta-D-fructose 6-phosphate + ATP = beta-D-fructose 1,6-bisphosphate + ADP + H(+). It functions in the pathway carbohydrate degradation; glycolysis; D-glyceraldehyde 3-phosphate and glycerone phosphate from D-glucose: step 3/4. With respect to regulation, allosterically activated by ADP, AMP, or fructose 2,6-bisphosphate, and allosterically inhibited by ATP or citrate. GlcNAcylation by OGT overcomes allosteric regulation. Functionally, catalyzes the phosphorylation of D-fructose 6-phosphate to fructose 1,6-bisphosphate by ATP, the first committing step of glycolysis. Negatively regulates the phagocyte oxidative burst in response to bacterial infection by controlling cellular NADPH biosynthesis and NADPH oxidase-derived reactive oxygen species. Upon macrophage activation, drives the metabolic switch toward glycolysis, thus preventing glucose turnover that produces NADPH via pentose phosphate pathway. In Bos taurus (Bovine), this protein is ATP-dependent 6-phosphofructokinase, liver type (PFKL).